Reading from the N-terminus, the 242-residue chain is Biosynthetic peptidoglycan transglycosylase (242 aa).

The helical transmembrane segment at 19–39 threads the bilayer; sequence LMVVLAVFWGGGIALFSVAPV.

This sequence belongs to the glycosyltransferase 51 family.

It localises to the cell inner membrane. It catalyses the reaction [GlcNAc-(1-&gt;4)-Mur2Ac(oyl-L-Ala-gamma-D-Glu-L-Lys-D-Ala-D-Ala)](n)-di-trans,octa-cis-undecaprenyl diphosphate + beta-D-GlcNAc-(1-&gt;4)-Mur2Ac(oyl-L-Ala-gamma-D-Glu-L-Lys-D-Ala-D-Ala)-di-trans,octa-cis-undecaprenyl diphosphate = [GlcNAc-(1-&gt;4)-Mur2Ac(oyl-L-Ala-gamma-D-Glu-L-Lys-D-Ala-D-Ala)](n+1)-di-trans,octa-cis-undecaprenyl diphosphate + di-trans,octa-cis-undecaprenyl diphosphate + H(+). Its pathway is cell wall biogenesis; peptidoglycan biosynthesis. Functionally, peptidoglycan polymerase that catalyzes glycan chain elongation from lipid-linked precursors. This Escherichia coli O139:H28 (strain E24377A / ETEC) protein is Biosynthetic peptidoglycan transglycosylase.